Consider the following 206-residue polypeptide: FMN-dependent NADH:quinone oxidoreductase 2 (206 aa).

Residues serine 10, 16-18 (SYS), and 140-143 (SCGG) each bind FMN.

It belongs to the azoreductase type 1 family. As to quaternary structure, homodimer. FMN serves as cofactor.

The catalysed reaction is 2 a quinone + NADH + H(+) = 2 a 1,4-benzosemiquinone + NAD(+). It carries out the reaction N,N-dimethyl-1,4-phenylenediamine + anthranilate + 2 NAD(+) = 2-(4-dimethylaminophenyl)diazenylbenzoate + 2 NADH + 2 H(+). In terms of biological role, quinone reductase that provides resistance to thiol-specific stress caused by electrophilic quinones. Functionally, also exhibits azoreductase activity. Catalyzes the reductive cleavage of the azo bond in aromatic azo compounds to the corresponding amines. This Cupriavidus pinatubonensis (strain JMP 134 / LMG 1197) (Cupriavidus necator (strain JMP 134)) protein is FMN-dependent NADH:quinone oxidoreductase 2.